Reading from the N-terminus, the 363-residue chain is Pyrimidine monooxygenase RutA (363 aa).

FMN contacts are provided by residues 49–50, N115, E124, 140–141, and S190; these read IK and RY.

This sequence belongs to the NtaA/SnaA/DszA monooxygenase family. RutA subfamily.

The enzyme catalyses uracil + FMNH2 + NADH + O2 = (Z)-3-ureidoacrylate + FMN + NAD(+) + H2O + H(+). It carries out the reaction thymine + FMNH2 + NADH + O2 = (Z)-2-methylureidoacrylate + FMN + NAD(+) + H2O + H(+). Functionally, catalyzes the pyrimidine ring opening between N-3 and C-4 by an unusual flavin hydroperoxide-catalyzed mechanism, adding oxygen atoms in the process to yield ureidoacrylate peracid, that immediately reacts with FMN forming ureidoacrylate and FMN-N(5)-oxide. The FMN-N(5)-oxide reacts spontaneously with NADH to produce FMN. Requires the flavin reductase RutF to regenerate FMN in vivo. The chain is Pyrimidine monooxygenase RutA from Escherichia coli O157:H7 (strain EC4115 / EHEC).